A 687-amino-acid polypeptide reads, in one-letter code: MAKDLFLEIGCEEIPAGFVPKAMADMELLIKKEFDSARIEYGEIVTLGTPRRLVLAVKGVAERQPDAELTAMGPAKSHAYDADGNPTKAAQGFARGQGIDVSQLKLVTTEKGEYLAAVKSEIGRATAELLPELLPRLIGNIPFKKSMRWADFDVRFARPIHWIVALFDGKVVPFSFGNIDSGSASRGHRFMANTSFPVRDLAHYLEECERHFVIPDPNKRKEIIRAEIERVAKQAKGNVLPDEALLEQVSYLVEYPSAVHGTFSPDFLVVPREVLITSMREHQRYFSLVDDEGKLLPGFITINNTITEDPQVVVKGNERVLRARLSDARFFFDEDHKVRLEARVESLKSVVYQAKLGTSYEKMERFRELGKRLAQRLNPAVTKEVERAATLCKADLVSGMVGEFPEVQGIMGREYALHDGEEKAVANAIAEHYLPTQAGGELPASDIGAFVSLADKMDTICGCFSVGLIPTGSADPYALRRSALGIINIILDKGYREPLSDFVKASLDLLSAKATRPLAEVQKDVLDFFRGRFVNLMADRFPSDAVEAVVSVSFDDLVEAAAKIEALAGFRNRDDFGPLAVAFKRVCNIVKDGVDTPVSTELFQDAAEGELHQALTQVSGKVAAALKKADYLAALTEIATLKPAVDLFFEKVMVMAEDERVRQNRLALLTGIARLFGSLADFSRLSP.

Belongs to the class-II aminoacyl-tRNA synthetase family. Tetramer of two alpha and two beta subunits.

The protein localises to the cytoplasm. It carries out the reaction tRNA(Gly) + glycine + ATP = glycyl-tRNA(Gly) + AMP + diphosphate. The sequence is that of Glycine--tRNA ligase beta subunit from Citrifermentans bemidjiense (strain ATCC BAA-1014 / DSM 16622 / JCM 12645 / Bem) (Geobacter bemidjiensis).